The chain runs to 268 residues: Glucosamine-6-phosphate deaminase (268 aa).

Asp72 acts as the Proton acceptor; for enolization step in catalysis. Asp141 serves as the catalytic For ring-opening step. Residue His143 is the Proton acceptor; for ring-opening step of the active site. The For ring-opening step role is filled by Glu148.

It belongs to the glucosamine/galactosamine-6-phosphate isomerase family. NagB subfamily. Homohexamer.

The catalysed reaction is alpha-D-glucosamine 6-phosphate + H2O = beta-D-fructose 6-phosphate + NH4(+). The protein operates within amino-sugar metabolism; N-acetylneuraminate degradation; D-fructose 6-phosphate from N-acetylneuraminate: step 5/5. Allosterically activated by N-acetylglucosamine 6-phosphate (GlcNAc6P). Its function is as follows. Catalyzes the reversible isomerization-deamination of glucosamine 6-phosphate (GlcN6P) to form fructose 6-phosphate (Fru6P) and ammonium ion. The chain is Glucosamine-6-phosphate deaminase from Histophilus somni (strain 129Pt) (Haemophilus somnus).